Here is an 835-residue protein sequence, read N- to C-terminus: Protein VP3 (835 aa).

The interval 171–245 (RKIKERMTTS…KHTIKLKQEK (75 aa)) is N7-methyltransferase activity. The 2'-O-methyltransferase activity stretch occupies residues 246–428 (WLGKRVSQFD…ITIKRFIPKG (183 aa)). Residues 429-555 (VFYAFINNIT…NHLFIINGTD (127 aa)) are N7-methyltransferase activity. Positions 556 to 692 (KYYKLDQYAN…GYINKVYSIT (137 aa)) are GTase/RTPase activity. The 2'-5'-phosphodiesterase activity stretch occupies residues 693-835 (YADDPNYFIG…RGETVFDMSE (143 aa)). Catalysis depends on for 2'-5'-phosphodiesterase activity residues His-718, Thr-720, His-797, and Thr-799.

Belongs to the rotavirus VP3 family. As to quaternary structure, interacts with VP1. Interacts with VP2.

The protein localises to the virion. The catalysed reaction is a 5'-end diphospho-ribonucleoside in mRNA + GTP + H(+) = a 5'-end (5'-triphosphoguanosine)-ribonucleoside in mRNA + diphosphate. It carries out the reaction a 5'-end (5'-triphosphoguanosine)-ribonucleoside in mRNA + S-adenosyl-L-methionine = a 5'-end (N(7)-methyl 5'-triphosphoguanosine)-ribonucleoside in mRNA + S-adenosyl-L-homocysteine. The enzyme catalyses 5'-triphosphoadenylyl-(2'-&gt;5')-adenylyl-(2'-&gt;5')-adenosine + 2 H2O = 2 AMP + ATP + 2 H(+). Its function is as follows. Multifunctional enzyme involved in mRNA capping. Catalyzes the formation of the 5' cap structure on the viral plus-strand transcripts. Specifically binds to GTP and displays guanylyltransferase and methyltransferase activities. Has affinity for ssRNA but not for dsRNA. Capping activity is non-specific and caps RNAs that initiate with either a G or an A residue. Together with VP1 polymerase, forms a VP1-VP3 complex positioned near the channels situated at each of the five-fold vertices of the core. Following infection, the outermost layer of the virus is lost, leaving a double-layered particle (DLP) made up of the core and VP6 shell. VP1 then catalyzes the transcription of fully conservative plus-strand genomic RNAs that are capped by VP3 and extruded through the DLP's channels into the cytoplasm where they function as mRNAs for translation of viral proteins. DLPs probably have an RNA triphosphatase activity as well, whereas open cores do not. Counteracts the host innate immune response thanks to its phosphodiesterase that degrades the 5'-triphosphorylated, 2'-5' linked adenylate oligomers produced by the host cell IFN-inducible 2',5'-oligoadenylate synthetase (OAS). The host RNaseL is therefore not activated. The sequence is that of Protein VP3 from Rotavirus A (strain RVA/Human/Japan/KU/1995/G1P1A[8]) (RV-A).